A 200-amino-acid polypeptide reads, in one-letter code: Large ribosomal subunit protein uL4 (200 aa).

The tract at residues 38–68 (GRQGSKQQKTRSDVRGGGKRPWRQKGTGRAR) is disordered. A compositionally biased stretch (basic residues) spans 54 to 65 (GGKRPWRQKGTG).

The protein belongs to the universal ribosomal protein uL4 family. Part of the 50S ribosomal subunit.

Its function is as follows. One of the primary rRNA binding proteins, this protein initially binds near the 5'-end of the 23S rRNA. It is important during the early stages of 50S assembly. It makes multiple contacts with different domains of the 23S rRNA in the assembled 50S subunit and ribosome. Forms part of the polypeptide exit tunnel. The protein is Large ribosomal subunit protein uL4 of Pseudomonas fluorescens (strain SBW25).